Reading from the N-terminus, the 208-residue chain is UPF0637 protein lp_2332 (208 aa).

It belongs to the UPF0637 family.

The chain is UPF0637 protein lp_2332 from Lactiplantibacillus plantarum (strain ATCC BAA-793 / NCIMB 8826 / WCFS1) (Lactobacillus plantarum).